Consider the following 32-residue polypeptide: Kappa-conotoxin SrXIA (32 aa).

4 disulfide bridges follow: C1-C15, C8-C20, C14-C24, and C19-C28. 4-carboxyglutamate is present on residues E9 and E10. P32 is subject to Proline amide.

It belongs to the conotoxin I2 superfamily. Expressed by the venom duct.

Its subcellular location is the secreted. In terms of biological role, kappa-conotoxins bind and inhibit voltage-gated potassium channels. This toxin inhibits Kv1.2/KCNA2 and Kv1.6/KCNA6. Produces stiffening of body, limbs and tail when injected intracranially into mice. The sequence is that of Kappa-conotoxin SrXIA from Conus spurius (Alphabet cone).